The primary structure comprises 228 residues: uncharacterized protein (228 aa).

An N-terminal signal peptide occupies residues 1–16 (MILLLLALISATTAFQ). A helical membrane pass occupies residues 206 to 225 (LFQTLFFVTLSFLVGSAFAL).

The protein to A.fulgidus AF_1225.

It localises to the membrane. This is an uncharacterized protein from Archaeoglobus fulgidus (strain ATCC 49558 / DSM 4304 / JCM 9628 / NBRC 100126 / VC-16).